The following is a 98-amino-acid chain: MSMVYINIFLAFTLSFMGLLIYRSHLMSSLLCLEGMMLSLFVLMTVTILSNHFTLASMAPIILLVFAACEAALGLSLLVMVSNTYGTDYVQNLNLLQC.

Helical transmembrane passes span 1 to 21, 29 to 49, and 61 to 81; these read MSMV…GLLI, SLLC…VTIL, and IILL…LVMV.

It belongs to the complex I subunit 4L family. Core subunit of respiratory chain NADH dehydrogenase (Complex I) which is composed of 45 different subunits.

It localises to the mitochondrion inner membrane. It catalyses the reaction a ubiquinone + NADH + 5 H(+)(in) = a ubiquinol + NAD(+) + 4 H(+)(out). In terms of biological role, core subunit of the mitochondrial membrane respiratory chain NADH dehydrogenase (Complex I) which catalyzes electron transfer from NADH through the respiratory chain, using ubiquinone as an electron acceptor. Part of the enzyme membrane arm which is embedded in the lipid bilayer and involved in proton translocation. This Taxidea taxus (American badger) protein is NADH-ubiquinone oxidoreductase chain 4L (MT-ND4L).